Reading from the N-terminus, the 404-residue chain is Odorant receptor 74a (404 aa).

Residues 1–38 (MSFHRYRPRLPGGELAPMPWPVSLYRVLNHVAWPLEAE) lie on the Cytoplasmic side of the membrane. The chain crosses the membrane as a helical span at residues 39–59 (SGRWTVFLDRLMIFLGFLVFC). Topologically, residues 60–67 (EHNEVDFH) are extracellular. Residues 68 to 88 (YLIANRQDMDNMLTGLPTYLI) traverse the membrane as a helical segment. The Cytoplasmic portion of the chain corresponds to 89–141 (LVEMQIRCFQLAWHKDRFRALLQRFYAEIYVSEEMEPHLFASIQRQMLATRVN). Residues 142-162 (STVYLLALLNFFLVPVTNVIY) form a helical membrane-spanning segment. At 163 to 181 (HRREMLYKQVYPFDNTQLH) the chain is on the extracellular side. A helical membrane pass occupies residues 182–202 (FFIPLLVLNFWVGFIITSMLF). Over 203-274 (GELNVMGELM…QRVEKEFTLR (72 aa)) the chain is Cytoplasmic. Residues 275–295 (IFVMFAFSAGLLCALFFKAFT) traverse the membrane as a helical segment. The Extracellular segment spans residues 296-303 (NPWGNVAY). The helical transmembrane segment at 304-324 (IVWFLAKFMELLALGMLGSIL) threads the bilayer. Topologically, residues 325–380 (LKTTDELGMMYYTADWEQVIHQSDNVGENVKLMKLVTLAIQLNSRPFFITGLNYFR) are cytoplasmic. A helical membrane pass occupies residues 381–401 (VSLTAVLKIIQGAFSYFTFLN). Residues 402 to 404 (SMR) are Extracellular-facing.

It belongs to the insect chemoreceptor superfamily. Heteromeric odorant receptor channel (TC 1.A.69) family. Or1a subfamily. In terms of assembly, interacts with Orco. Complexes exist early in the endomembrane system in olfactory sensory neurons (OSNs), coupling these complexes to the conserved ciliary trafficking pathway.

The protein resides in the cell membrane. Odorant receptor which mediates acceptance or avoidance behavior, depending on its substrates. The odorant receptor repertoire encodes a large collection of odor stimuli that vary widely in identity, intensity, and duration. May form a complex with Orco to form odorant-sensing units, providing sensitive and prolonged odorant signaling and calcium permeability. Involved in the behavioral responses to octanol, anisole, and 2-heptanone. The polypeptide is Odorant receptor 74a (Or74a) (Drosophila melanogaster (Fruit fly)).